The sequence spans 426 residues: MDNNIQRLIDSAKQSLNSPESYKYIDESFESCIKCTACTAVCPVSRNNPLYPGPKQSGPDGERLRLKSAELYDEALKYCTNCKRCEVACPSDVKIGDLIVRARNNHLAQSKKPLMNKLRDAILSNTDVMGKINTPLAPIVNTITGLKATKFMLEKTLNISKKRTLPKYAFGTFRSWYMKNALQDQQKFERKVAYFHGCYVNYNNPQLGKEFLKVFNAMNIGVMLLEKEKCCGLPLMVNGFPNRARNIAQFNTDYIGKMVDENGIDVISEASSCSLNLRDEYHHILGIDNAKVRPHIHMVTPFLYQLFKEGKTLPLKPLKLRVAYHTACHVDKAGWAPYTLEVLKKIPSLEIIMLPSQCCGIAGTYGFKSENYEISQSIGKNLFDNINEGGFDYVISECQTCKWQIDMSSNVTCIHPLTLLCMSMDA.

2 4Fe-4S ferredoxin-type domains span residues S21–G53 and K67–I99. [4Fe-4S] cluster contacts are provided by C32, C35, C38, C42, C79, C82, C85, and C89.

In terms of assembly, composed of a catalytic GlpA/B dimer and of GlpC.

The protein localises to the cell inner membrane. It functions in the pathway polyol metabolism; glycerol degradation via glycerol kinase pathway; glycerone phosphate from sn-glycerol 3-phosphate (anaerobic route): step 1/1. In terms of biological role, electron transfer protein; may also function as the membrane anchor for the GlpAB dimer. This Haemophilus influenzae (strain ATCC 51907 / DSM 11121 / KW20 / Rd) protein is Anaerobic glycerol-3-phosphate dehydrogenase subunit C (glpC).